The sequence spans 360 residues: Peptide chain release factor 1 (360 aa).

The residue at position 235 (glutamine 235) is an N5-methylglutamine. The span at 285 to 295 (RQAAEQTDMRR) shows a compositional bias: basic and acidic residues. The segment at 285 to 309 (RQAAEQTDMRRNLLGSGDRSDKIRT) is disordered.

This sequence belongs to the prokaryotic/mitochondrial release factor family. Methylated by PrmC. Methylation increases the termination efficiency of RF1.

It localises to the cytoplasm. Peptide chain release factor 1 directs the termination of translation in response to the peptide chain termination codons UAG and UAA. The polypeptide is Peptide chain release factor 1 (prfA) (Haemophilus influenzae (strain ATCC 51907 / DSM 11121 / KW20 / Rd)).